The sequence spans 163 residues: Urease accessory protein UreE (163 aa).

The disordered stretch occupies residues 134-163; that stretch reads EAGAYGGGHRHHHDDDAPSIRQPARLRIHE.

Belongs to the UreE family.

It localises to the cytoplasm. In terms of biological role, involved in urease metallocenter assembly. Binds nickel. Probably functions as a nickel donor during metallocenter assembly. This Methylobacillus flagellatus (strain ATCC 51484 / DSM 6875 / VKM B-1610 / KT) protein is Urease accessory protein UreE.